Consider the following 592-residue polypeptide: Protein kinase C zeta type (592 aa).

A PB1 domain is found at 15–98; that stretch reads RVRLKAHYGG…EGLIIHVFPS (84 aa). The segment at 79–145 is interaction with SQSTM1; the sequence is AFRLARQCRD…KRFNRRAYCG (67 aa). The Phorbol-ester/DAG-type zinc finger occupies 130–180; it reads GHLFQAKRFNRRAYCGQCSERIWGLARQGYRCINCKLLVHKRCHGLVPLTC. The Protein kinase domain occupies 252 to 518; it reads FDLIRVIGRG…FSDIKSHAFF (267 aa). Residues 258-266 and K281 contribute to the ATP site; that span reads IGRGSYAKV. D376 (proton acceptor) is an active-site residue. T410 bears the Phosphothreonine; by PDPK1 and PI3K mark. The 72-residue stretch at 519-590 folds into the AGC-kinase C-terminal domain; that stretch reads RSIDWDLLEK…INPLLLSTEE (72 aa). T560 carries the phosphothreonine modification. Position 591 is a phosphoserine (S591).

Belongs to the protein kinase superfamily. AGC Ser/Thr protein kinase family. PKC subfamily. As to quaternary structure, forms a ternary complex with SQSTM1 and KCNAB2. Forms another ternary complex with SQSTM1 and GABRR3. Forms a complex with SQSTM1 and MAP2K5. Interacts with PARD6A, PARD6B, PARD6G and SQSTM1. Part of a complex with PARD3, PARD6A or PARD6B or PARD6G and CDC42 or RAC1. Interacts with ADAP1/CENTA1. Forms a ternary complex composed of SQSTM1 and PAWR. Interacts directly with SQSTM1. Interacts with IKBKB. Interacts (via the protein kinase domain) with WWC1. Forms a tripartite complex with WWC1 and DDR1, but predominantly in the absence of collagen. Component of the Par polarity complex, composed of at least phosphorylated PRKCZ, PARD3 and TIAM1. Interacts with PDPK1 (via N-terminal region). Interacts with WDFY2 (via WD repeats 1-3). Interacts with VAMP2. Forms a complex with WDFY2 and VAMP2. Interacts with APPL1. Interacts with WWC1, WWC2 and WWC3. In terms of processing, CDH5 is required for its phosphorylation at Thr-410. Phosphorylated by protein kinase PDPK1; phosphorylation is inhibited by the apoptotic C-terminal cleavage product of PKN2. Phosphorylation at Thr-410 by PI3K activates the kinase. In terms of tissue distribution, expressed in brain, and to a lesser extent in lung, kidney and testis.

Its subcellular location is the cytoplasm. It localises to the endosome. The protein localises to the cell junction. The protein resides in the membrane. The enzyme catalyses L-seryl-[protein] + ATP = O-phospho-L-seryl-[protein] + ADP + H(+). It carries out the reaction L-threonyl-[protein] + ATP = O-phospho-L-threonyl-[protein] + ADP + H(+). With respect to regulation, atypical PKCs (PRKCI and PRKCZ) exhibit an elevated basal enzymatic activity (that may be due to the interaction with SMG1 or SQSTM1) and are not regulated by diacylglycerol, phosphatidylserine, phorbol esters or calcium ions. Two specific sites, Thr-410 (activation loop of the kinase domain) and Thr-560 (turn motif), need to be phosphorylated for its full activation. Phosphatidylinositol 3,4,5-trisphosphate might be a physiological activator. Isoform 2: Constitutively active. Calcium- and diacylglycerol-independent serine/threonine-protein kinase that functions in phosphatidylinositol 3-kinase (PI3K) pathway and mitogen-activated protein (MAP) kinase cascade, and is involved in NF-kappa-B activation, mitogenic signaling, cell proliferation, cell polarity, inflammatory response and maintenance of long-term potentiation (LTP). Upon lipopolysaccharide (LPS) treatment in macrophages, or following mitogenic stimuli, functions downstream of PI3K to activate MAP2K1/MEK1-MAPK1/ERK2 signaling cascade independently of RAF1 activation. Required for insulin-dependent activation of AKT3, but may function as an adapter rather than a direct activator. Upon insulin treatment may act as a downstream effector of PI3K and contribute to the activation of translocation of the glucose transporter SLC2A4/GLUT4 and subsequent glucose transport in adipocytes. In EGF-induced cells, binds and activates MAP2K5/MEK5-MAPK7/ERK5 independently of its kinase activity and can activate JUN promoter through MEF2C. Through binding with SQSTM1/p62, functions in interleukin-1 signaling and activation of NF-kappa-B with the specific adapters RIPK1 and TRAF6. Participates in TNF-dependent transactivation of NF-kappa-B by phosphorylating and activating IKBKB kinase, which in turn leads to the degradation of NF-kappa-B inhibitors. In migrating astrocytes, forms a cytoplasmic complex with PARD6A and is recruited by CDC42 to function in the establishment of cell polarity along with the microtubule motor and dynein. In association with FEZ1, stimulates neuronal differentiation in PC12 cells. In the inflammatory response, is required for the T-helper 2 (Th2) differentiation process, including interleukin production, efficient activation of JAK1 and the subsequent phosphorylation and nuclear translocation of STAT6. May be involved in development of allergic airway inflammation (asthma), a process dependent on Th2 immune response. In the NF-kappa-B-mediated inflammatory response, can relieve SETD6-dependent repression of NF-kappa-B target genes by phosphorylating the RELA subunit at 'Ser-311'. Phosphorylates VAMP2 in vitro. Phosphorylates and activates LRRK1, which phosphorylates RAB proteins involved in intracellular trafficking. Functionally, involved in late synaptic long term potention phase in CA1 hippocampal cells and long term memory maintenance. In Homo sapiens (Human), this protein is Protein kinase C zeta type (PRKCZ).